The sequence spans 440 residues: NADH-quinone oxidoreductase subunit D 2 (440 aa).

This sequence belongs to the complex I 49 kDa subunit family. NDH-1 is composed of 14 different subunits. Subunits NuoB, C, D, E, F, and G constitute the peripheral sector of the complex.

It localises to the cell membrane. The catalysed reaction is a quinone + NADH + 5 H(+)(in) = a quinol + NAD(+) + 4 H(+)(out). Functionally, NDH-1 shuttles electrons from NADH, via FMN and iron-sulfur (Fe-S) centers, to quinones in the respiratory chain. The immediate electron acceptor for the enzyme in this species is believed to be a menaquinone. Couples the redox reaction to proton translocation (for every two electrons transferred, four hydrogen ions are translocated across the cytoplasmic membrane), and thus conserves the redox energy in a proton gradient. In Streptomyces coelicolor (strain ATCC BAA-471 / A3(2) / M145), this protein is NADH-quinone oxidoreductase subunit D 2.